The primary structure comprises 143 residues: Transcriptional regulator MraZ (143 aa).

SpoVT-AbrB domains follow at residues 5 to 47 and 76 to 119; these read EYHH…PMQG and ATEC…SRSR.

Belongs to the MraZ family. As to quaternary structure, forms oligomers.

It localises to the cytoplasm. The protein localises to the nucleoid. The sequence is that of Transcriptional regulator MraZ from Moorella thermoacetica (strain ATCC 39073 / JCM 9320).